The sequence spans 229 residues: MSGFTDRIIASMAGGLVVSCQAYPGEPLRHPETMAQMAAAVEAGGAVAVRAQGLSDVSAVKGRVSVPVVGIWKEGDEGIYITPTLRHARCVSAAGADVVALDGTRRERADGLSLAETIERLKREYDVVVMADCGSVDDGLFAAEAGADLIGTTLCGYTGERPKTDGPDYEVIEALVKKLDGDRPVIAEGRIHTPDQARRAMDLGAHAVVVGTAITHPTSITGWFRDALR.

The protein belongs to the NanE family.

The enzyme catalyses an N-acyl-D-glucosamine 6-phosphate = an N-acyl-D-mannosamine 6-phosphate. Its pathway is amino-sugar metabolism; N-acetylneuraminate degradation; D-fructose 6-phosphate from N-acetylneuraminate: step 3/5. In terms of biological role, converts N-acetylmannosamine-6-phosphate (ManNAc-6-P) to N-acetylglucosamine-6-phosphate (GlcNAc-6-P). This chain is Putative N-acetylmannosamine-6-phosphate 2-epimerase, found in Cutibacterium acnes (strain DSM 16379 / KPA171202) (Propionibacterium acnes).